Consider the following 323-residue polypeptide: Beta-ketoacyl-[acyl-carrier-protein] synthase III 1 (323 aa).

Active-site residues include Cys-114 and His-254. The ACP-binding stretch occupies residues 255-259 (QANLR). Residue Asn-284 is part of the active site.

It belongs to the thiolase-like superfamily. FabH family. Homodimer.

The protein resides in the cytoplasm. The enzyme catalyses malonyl-[ACP] + acetyl-CoA + H(+) = 3-oxobutanoyl-[ACP] + CO2 + CoA. It functions in the pathway lipid metabolism; fatty acid biosynthesis. Functionally, catalyzes the condensation reaction of fatty acid synthesis by the addition to an acyl acceptor of two carbons from malonyl-ACP. Catalyzes the first condensation reaction which initiates fatty acid synthesis and may therefore play a role in governing the total rate of fatty acid production. Possesses both acetoacetyl-ACP synthase and acetyl transacylase activities. Its substrate specificity determines the biosynthesis of branched-chain and/or straight-chain of fatty acids. In Lactiplantibacillus plantarum (strain ATCC BAA-793 / NCIMB 8826 / WCFS1) (Lactobacillus plantarum), this protein is Beta-ketoacyl-[acyl-carrier-protein] synthase III 1.